Here is a 208-residue protein sequence, read N- to C-terminus: MSNAASPATSAAPVRHYPMSCRTLATQEQIWSATAKCAKQIAEDYKQYNLSDENPLYLLCVLKGSFMFTADLARFLCDEGVPVRIEFICASSYGTDVKTSGEVRLLLDVRDPVENRHLLIVEDIVDSAITLEYLKRFLQAKQPASLKTVVLLDKPSGRKVTLSVDYPVITIPHAFVIGYGMDFAEAYRELRDVCVLKKEYYEKPASKL.

Residues Lys63, 122–130 (EDIVDSAIT), Lys154, and Asp182 each bind GMP. The active-site Proton acceptor is the Asp126. Mg(2+) is bound at residue Asp182.

This sequence belongs to the purine/pyrimidine phosphoribosyltransferase family. It depends on Mg(2+) as a cofactor.

It localises to the cytoplasm. It carries out the reaction IMP + diphosphate = hypoxanthine + 5-phospho-alpha-D-ribose 1-diphosphate. The enzyme catalyses GMP + diphosphate = guanine + 5-phospho-alpha-D-ribose 1-diphosphate. Its pathway is purine metabolism; IMP biosynthesis via salvage pathway; IMP from hypoxanthine: step 1/1. Converts guanine to guanosine monophosphate, and hypoxanthine to inosine monophosphate. Transfers the 5-phosphoribosyl group from 5-phosphoribosylpyrophosphate onto the purine. Plays a central role in the generation of purine nucleotides through the purine salvage pathway. This Crithidia fasciculata protein is Hypoxanthine-guanine phosphoribosyltransferase (HGPRT).